We begin with the raw amino-acid sequence, 230 residues long: Ureidoacrylate amidohydrolase RutB (230 aa).

Catalysis depends on D24, which acts as the Proton acceptor. K133 is a catalytic residue. C166 serves as the catalytic Nucleophile.

Belongs to the isochorismatase family. RutB subfamily.

It catalyses the reaction (Z)-3-ureidoacrylate + H2O + H(+) = (Z)-3-aminoacrylate + NH4(+) + CO2. The catalysed reaction is (Z)-3-ureidoacrylate + H2O = (Z)-3-aminoacrylate + carbamate + H(+). It carries out the reaction (Z)-2-methylureidoacrylate + H2O + H(+) = (Z)-2-methylaminoacrylate + NH4(+) + CO2. Its function is as follows. Hydrolyzes ureidoacrylate to form aminoacrylate and carbamate. The carbamate hydrolyzes spontaneously, thereby releasing one of the nitrogen atoms of the pyrimidine ring as ammonia and one of its carbon atoms as CO2. This chain is Ureidoacrylate amidohydrolase RutB, found in Escherichia coli O6:K15:H31 (strain 536 / UPEC).